Consider the following 807-residue polypeptide: Leucine-rich repeat-containing protein 41 (807 aa).

The interaction with Elongin BC complex stretch occupies residues 45 to 54 (ALFELCGRAV). Residues Ser-155, Ser-276, and Ser-326 each carry the phosphoserine modification. 3 disordered regions span residues 269–290 (ASRG…RRPR), 304–335 (TRRK…AIGG), and 349–403 (ASGT…GSGA). Thr-327 carries the phosphothreonine modification. Over residues 352-381 (TKQPSAPAAASASSSTSSKRAPASSASQPK) the composition is skewed to low complexity. Ser-368 is modified (phosphoserine). Residues 382–396 (PLKRFKRAAGKKGPR) are compositionally biased toward basic residues. 7 LRR repeats span residues 482–502 (WVSL…IFRL), 513–525 (AGCR…LSDL), 526–550 (FSPL…VLSI), 608–632 (SGSL…LVLQ), 638–661 (NLSL…VLFL), 696–723 (NSTL…VFSE), and 726–747 (SSSL…LLEF).

In terms of assembly, part of an E3 ubiquitin-protein ligase complex with Elongin BC (ELOB and ELOC), RBX1 and CUL5. Component of a probable ECS(LRRC41) complex which contains CUL5, RNF7/RBX2, Elongin BC and LRRC41. Interacts with CUL5, RNF7, ELOB and ELOC.

It functions in the pathway protein modification; protein ubiquitination. In terms of biological role, probable substrate recognition component of an ECS (Elongin BC-CUL2/5-SOCS-box protein) E3 ubiquitin ligase complex which mediates the ubiquitination and subsequent proteasomal degradation of target proteins. The polypeptide is Leucine-rich repeat-containing protein 41 (Lrrc41) (Mus musculus (Mouse)).